Reading from the N-terminus, the 254-residue chain is Large ribosomal subunit protein uL2 (254 aa).

Belongs to the universal ribosomal protein uL2 family.

The chain is Large ribosomal subunit protein uL2 (RPL2) from Candida glabrata (strain ATCC 2001 / BCRC 20586 / JCM 3761 / NBRC 0622 / NRRL Y-65 / CBS 138) (Yeast).